Reading from the N-terminus, the 733-residue chain is Photosystem I P700 chlorophyll a apoprotein A2 (733 aa).

Transmembrane regions (helical) follow at residues 46-69 (IFAS…FHVA), 134-157 (LYLG…LHLQ), 174-198 (LNHH…HVAL), 272-290 (IAHH…GHMY), 329-352 (LHIQ…QHMY), 368-394 (AALY…IFFV), 416-438 (AIIS…LYIH), and 516-534 (FLVH…LILV). C558 and C567 together coordinate [4Fe-4S] cluster. Transmembrane regions (helical) follow at residues 574 to 595 (AFYL…YWHW) and 642 to 664 (LSVW…MFLI). 3 residues coordinate chlorophyll a: H653, M661, and Y669. W670 provides a ligand contact to phylloquinone. Residues 706 to 726 (LVGLVHFAVGYILTYAAFVIA) form a helical membrane-spanning segment.

Belongs to the PsaA/PsaB family. The PsaA/B heterodimer binds the P700 chlorophyll special pair and subsequent electron acceptors. PSI consists of a core antenna complex that captures photons, and an electron transfer chain that converts photonic excitation into a charge separation. The eukaryotic PSI reaction center is composed of at least 11 subunits. P700 is a chlorophyll a/chlorophyll a' dimer, A0 is one or more chlorophyll a, A1 is one or both phylloquinones and FX is a shared 4Fe-4S iron-sulfur center. serves as cofactor.

The protein resides in the plastid. It localises to the chloroplast thylakoid membrane. It catalyses the reaction reduced [plastocyanin] + hnu + oxidized [2Fe-2S]-[ferredoxin] = oxidized [plastocyanin] + reduced [2Fe-2S]-[ferredoxin]. In terms of biological role, psaA and PsaB bind P700, the primary electron donor of photosystem I (PSI), as well as the electron acceptors A0, A1 and FX. PSI is a plastocyanin/cytochrome c6-ferredoxin oxidoreductase, converting photonic excitation into a charge separation, which transfers an electron from the donor P700 chlorophyll pair to the spectroscopically characterized acceptors A0, A1, FX, FA and FB in turn. Oxidized P700 is reduced on the lumenal side of the thylakoid membrane by plastocyanin or cytochrome c6. This chain is Photosystem I P700 chlorophyll a apoprotein A2, found in Trieres chinensis (Marine centric diatom).